We begin with the raw amino-acid sequence, 166 residues long: MMTQPQPLAFRIGLGYDSHRLGPDGPLRIGGLDVAGDFHAIGHSDADVLLHAVTDALMGAIAGPDIGRLFPDDADENRGRDSRDFVEEALRRVNEAGYEINNVDAVILAQKPKMAPHIDSMRAAVAEMLQTTIEQVGLKAKTGEGVDAVGRSEAIAARAVVMLSRR.

Aspartate 17 and histidine 19 together coordinate a divalent metal cation. 4-CDP-2-C-methyl-D-erythritol 2-phosphate-binding positions include 17-19 (DSH) and 43-44 (HS). Histidine 51 is an a divalent metal cation binding site. 4-CDP-2-C-methyl-D-erythritol 2-phosphate-binding positions include 65–67 (DIG), 109–115 (AQKPKMA), and arginine 151.

It belongs to the IspF family. Homotrimer. A divalent metal cation serves as cofactor.

The enzyme catalyses 4-CDP-2-C-methyl-D-erythritol 2-phosphate = 2-C-methyl-D-erythritol 2,4-cyclic diphosphate + CMP. The protein operates within isoprenoid biosynthesis; isopentenyl diphosphate biosynthesis via DXP pathway; isopentenyl diphosphate from 1-deoxy-D-xylulose 5-phosphate: step 4/6. Its function is as follows. Involved in the biosynthesis of isopentenyl diphosphate (IPP) and dimethylallyl diphosphate (DMAPP), two major building blocks of isoprenoid compounds. Catalyzes the conversion of 4-diphosphocytidyl-2-C-methyl-D-erythritol 2-phosphate (CDP-ME2P) to 2-C-methyl-D-erythritol 2,4-cyclodiphosphate (ME-CPP) with a corresponding release of cytidine 5-monophosphate (CMP). The protein is 2-C-methyl-D-erythritol 2,4-cyclodiphosphate synthase of Rhodopirellula baltica (strain DSM 10527 / NCIMB 13988 / SH1).